We begin with the raw amino-acid sequence, 320 residues long: Putative HTH-type transcriptional regulatory protein VNG_2112C (320 aa).

The HTH cro/C1-type domain maps to 132–189; that stretch reads LADRREDERLSLGQLASELGVSRRTVSKYEDGMNASIEVAMRLEDLFGGELTAPVDVM. The segment at residues 143–162 is a DNA-binding region (H-T-H motif); the sequence is LGQLASELGVSRRTVSKYED.

In Halobacterium salinarum (strain ATCC 700922 / JCM 11081 / NRC-1) (Halobacterium halobium), this protein is Putative HTH-type transcriptional regulatory protein VNG_2112C.